We begin with the raw amino-acid sequence, 355 residues long: Phytoene synthase (355 aa).

It belongs to the phytoene/squalene synthase family. Requires ATP as cofactor. Mn(2+) is required as a cofactor. Mg(2+) serves as cofactor.

It participates in carotenoid biosynthesis; phytoene biosynthesis. Its function is as follows. Involved in the biosynthesis of carotenoids. Catalyzes the condensation of two molecules of geranylgeranyl diphosphate (GGPP) to give prephytoene diphosphate (PPPP) and the subsequent rearrangement of the cyclopropylcarbinyl intermediate to yield phytoene. The protein is Phytoene synthase (crtB) of Cereibacter sphaeroides (strain ATCC 17023 / DSM 158 / JCM 6121 / CCUG 31486 / LMG 2827 / NBRC 12203 / NCIMB 8253 / ATH 2.4.1.) (Rhodobacter sphaeroides).